Consider the following 275-residue polypeptide: Large ribosomal subunit protein uL2 (275 aa).

The segment covering 28–38 (EPYAPLLDKKS) has biased composition (basic and acidic residues). Disordered regions lie at residues 28–55 (EPYA…RHVG) and 224–258 (AMNP…GYKT).

Belongs to the universal ribosomal protein uL2 family. As to quaternary structure, part of the 50S ribosomal subunit. Forms a bridge to the 30S subunit in the 70S ribosome.

In terms of biological role, one of the primary rRNA binding proteins. Required for association of the 30S and 50S subunits to form the 70S ribosome, for tRNA binding and peptide bond formation. It has been suggested to have peptidyltransferase activity; this is somewhat controversial. Makes several contacts with the 16S rRNA in the 70S ribosome. The sequence is that of Large ribosomal subunit protein uL2 from Cellvibrio japonicus (strain Ueda107) (Pseudomonas fluorescens subsp. cellulosa).